Reading from the N-terminus, the 39-residue chain is Photosystem II reaction center protein L (39 aa).

Residues 18–38 (SLYLGLLFVFVTGVLMSSYFF) traverse the membrane as a helical segment.

The protein belongs to the PsbL family. In terms of assembly, PSII is composed of 1 copy each of membrane proteins PsbA, PsbB, PsbC, PsbD, PsbE, PsbF, PsbH, PsbI, PsbJ, PsbK, PsbL, PsbM, PsbT, PsbX, PsbY, PsbZ, Psb30/Ycf12, peripheral proteins PsbO, CyanoQ (PsbQ), PsbU, PsbV and a large number of cofactors. It forms dimeric complexes.

Its subcellular location is the cellular thylakoid membrane. Its function is as follows. One of the components of the core complex of photosystem II (PSII). PSII is a light-driven water:plastoquinone oxidoreductase that uses light energy to abstract electrons from H(2)O, generating O(2) and a proton gradient subsequently used for ATP formation. It consists of a core antenna complex that captures photons, and an electron transfer chain that converts photonic excitation into a charge separation. This subunit is found at the monomer-monomer interface and is required for correct PSII assembly and/or dimerization. The chain is Photosystem II reaction center protein L from Synechococcus sp. (strain CC9605).